Consider the following 177-residue polypeptide: Large ribosomal subunit protein uL6 (177 aa).

The protein belongs to the universal ribosomal protein uL6 family. As to quaternary structure, part of the 50S ribosomal subunit.

Functionally, this protein binds to the 23S rRNA, and is important in its secondary structure. It is located near the subunit interface in the base of the L7/L12 stalk, and near the tRNA binding site of the peptidyltransferase center. The chain is Large ribosomal subunit protein uL6 from Roseobacter denitrificans (strain ATCC 33942 / OCh 114) (Erythrobacter sp. (strain OCh 114)).